A 368-amino-acid chain; its full sequence is Quinolinate synthase (368 aa).

Positions 46 and 63 each coordinate iminosuccinate. Cys110 contributes to the [4Fe-4S] cluster binding site. Iminosuccinate-binding positions include 141–143 (YVN) and Ser162. Residue Cys230 participates in [4Fe-4S] cluster binding. Residues 256–258 (HPE) and Thr273 each bind iminosuccinate. Residue Cys320 participates in [4Fe-4S] cluster binding.

This sequence belongs to the quinolinate synthase family. Type 3 subfamily. The cofactor is [4Fe-4S] cluster.

It is found in the cytoplasm. The enzyme catalyses iminosuccinate + dihydroxyacetone phosphate = quinolinate + phosphate + 2 H2O + H(+). The protein operates within cofactor biosynthesis; NAD(+) biosynthesis; quinolinate from iminoaspartate: step 1/1. Functionally, catalyzes the condensation of iminoaspartate with dihydroxyacetone phosphate to form quinolinate. The chain is Quinolinate synthase from Bacillus thuringiensis (strain Al Hakam).